The chain runs to 541 residues: 2-hydroxyacylsphingosine 1-beta-galactosyltransferase (541 aa).

The N-terminal stretch at 1–20 (MKSYTPYFMLLWSAVGIARA) is a signal peptide. 3 N-linked (GlcNAc...) asparagine glycosylation sites follow: N78, N333, and N442. The chain crosses the membrane as a helical span at residues 472 to 492 (YFLLDIAFVLLLGAVLLYFIL). Positions 518–541 (HYQNGIRNGKYKGNGRVKHEKKVR) are disordered. Over residues 526–541 (GKYKGNGRVKHEKKVR) the composition is skewed to basic residues.

The protein belongs to the UDP-glycosyltransferase family.

The protein localises to the membrane. It is found in the endoplasmic reticulum. It catalyses the reaction an N-acylsphing-4-enine + UDP-alpha-D-galactose = a beta-D-galactosyl-(1&lt;-&gt;1')-N-acylsphing-4-enine + UDP + H(+). It carries out the reaction N-(2-hydroxy-hexanoyl)-sphing-4-enine + UDP-alpha-D-galactose = N-(2-hydroxy-hexanoyl)-beta-D-galactosyl-sphing-4-enine + UDP + H(+). The enzyme catalyses N-(2-hydroxy-hexanoyl)-sphinganine + UDP-alpha-D-galactose = N-(2-hydroxyhexanoyl)-beta-D-galactosylsphinganine + UDP + H(+). The catalysed reaction is an N-acyl-sphingoid base + UDP-alpha-D-galactose = a D-galactosylceramide + UDP + H(+). It participates in sphingolipid metabolism; galactosylceramide biosynthesis. Functionally, catalyzes the transfer of galactose to ceramide, a key enzymatic step in the biosynthesis of galactocerebrosides, which are abundant sphingolipids of the myelin membrane of the central nervous system and peripheral nervous system. Galactosylates both hydroxy- and non-hydroxy fatty acid-containing ceramides and diglycerides. This Mus musculus (Mouse) protein is 2-hydroxyacylsphingosine 1-beta-galactosyltransferase.